Here is a 1037-residue protein sequence, read N- to C-terminus: Sodium/potassium exporting P-type ATPase cta3 (1037 aa).

Residues 1 to 61 are Cytoplasmic-facing; it reads MVTINISNPV…GVSAWKVLLR (61 aa). A helical transmembrane segment spans residues 62–82; it reads QVLNAMCVVLILAAALSFGTT. A topological domain (extracellular) is located at residue D83. A helical membrane pass occupies residues 84–104; that stretch reads WIEGGVISAIIVLNITVGFIQ. Topologically, residues 105 to 281 are cytoplasmic; it reads EYKAEKTMDS…LNVGTPLQRK (177 aa). The helical transmembrane segment at 282–302 threads the bilayer; sequence LTVLAYILFCIAIILAIIVMA. Residues 303–313 lie on the Extracellular side of the membrane; that stretch reads AHSFHVTNEVS. The helical transmembrane segment at 314–334 threads the bilayer; it reads IYAISLGISIIPESLIAVLSI. Residues 335–760 are Cytoplasmic-facing; the sequence is TMAMGQKNMS…GRRMFDNIMR (426 aa). The active-site 4-aspartylphosphate intermediate is the D368. Residues D368 and T370 each contribute to the Mg(2+) site. ATP-binding residues include T370, E468, K520, R559, T620, G621, D622, R678, and K684. Mg(2+) is bound at residue D703. Position 706 (N706) interacts with ATP. A helical transmembrane segment spans residues 761–781; it reads FVLHLLVSNVGEVILLVVGLA. Over 782-787 the chain is Extracellular; sequence FRDEVH. Residues 788 to 808 form a helical membrane-spanning segment; sequence LSVFPMSPVEILWCNMITSSF. Topologically, residues 809–844 are cytoplasmic; that stretch reads PSMGLGMELAQPDVMERLPHDNKVGIFQKSLIVDMM. A helical membrane pass occupies residues 845–865; sequence VYGFFLGVVSLMTWVVIMYGF. The Extracellular portion of the chain corresponds to 866–889; sequence GTGNLSYDCNAHYHAGCNDVFKAR. An N-linked (GlcNAc...) asparagine glycan is attached at N869. The helical transmembrane segment at 890–910 threads the bilayer; the sequence is SAVFAVVTFCILIMAVEVKNF. Residues 911-939 are Cytoplasmic-facing; it reads DNSLFNLHGIPWGEWNFRYFLHTLVENKF. The chain crosses the membrane as a helical span at residues 940–960; it reads LAWAIALAAVSVFPTIYIPVI. The Extracellular segment spans residues 961–969; the sequence is NRDVFKHTY. A helical transmembrane segment spans residues 970–990; sequence IGWEWGVVAVAVMFYFFYVEI. Residues 991–1037 are Cytoplasmic-facing; it reads WKSIRRSLTNPQKKGKFRRTLSNTITTESKLSEKDLEHRLFLQSRRA. Phosphoserine is present on S1012.

Belongs to the cation transport ATPase (P-type) (TC 3.A.3) family. Type IID subfamily. It depends on Mg(2+) as a cofactor. Post-translationally, the active site is phosphorylated in presence of sodium or potassium and in conditions of higher pH. Not phosphorylated in presence of calcium ions.

Its subcellular location is the cell membrane. It catalyses the reaction Na(+)(in) + ATP + H2O = Na(+)(out) + ADP + phosphate + H(+). It carries out the reaction K(+)(in) + ATP + H2O = K(+)(out) + ADP + phosphate + H(+). Catalyzes the hydrolysis of ATP coupled with the export of sodium and potassium from the cell. May export sodium less efficiently. May transport other cations such as lithium. Sodium/potassium efflux ATPases are involved in salt tolerance and maintaining the membrane potential across the plasma membrane in high salinity (Na+) or alkaline (K+) environments. The chain is Sodium/potassium exporting P-type ATPase cta3 from Schizosaccharomyces pombe (strain 972 / ATCC 24843) (Fission yeast).